The following is a 791-amino-acid chain: Organellar oligopeptidase A, chloroplastic/mitochondrial (791 aa).

The transit peptide at methionine 1–alanine 82 directs the protein to the chloroplast and mitochondrion. Coiled coils occupy residues arginine 118–serine 138 and aspartate 239–lysine 259. A Zn(2+)-binding site is contributed by histidine 571. Glutamate 572 is a catalytic residue. Histidine 575 and glutamate 601 together coordinate Zn(2+). Histidine 703–tyrosine 709 contacts substrate.

This sequence belongs to the peptidase M3 family. Zn(2+) is required as a cofactor.

Its subcellular location is the mitochondrion matrix. It is found in the plastid. The protein resides in the chloroplast stroma. The enzyme catalyses Hydrolysis of oligopeptides, with broad specificity. Gly or Ala commonly occur as P1 or P1' residues, but more distant residues are also important, as is shown by the fact that Z-Gly-Pro-Gly-|-Gly-Pro-Ala is cleaved, but not Z-(Gly)(5).. With respect to regulation, inhibited by salicylic acid. Its function is as follows. Oligopeptidase degrading short peptides from 8 to 23 amino acid residues. Plays a role in the degradation of transit peptides and of peptides derived from other proteolytic events. Does not exhibit a strict cleavage pattern. Binds salicylic acid. The protein is Organellar oligopeptidase A, chloroplastic/mitochondrial of Arabidopsis thaliana (Mouse-ear cress).